We begin with the raw amino-acid sequence, 156 residues long: Keratin-associated protein 13-4 (156 aa).

4 tandem repeats follow at residues 37 to 46 (CQLGSSLYRN), 47 to 56 (CQKTCWEPTS), 57 to 66 (CRKSCYRRRT), and 73 to 82 (CQTTCSRSLG). The 4 X 10 AA approximate repeats stretch occupies residues 37–82 (CQLGSSLYRNCQKTCWEPTSCRKSCYRRRTSMLCSPCQTTCSRSLG).

The protein belongs to the PMG family. In terms of assembly, interacts with hair keratins.

Its function is as follows. In the hair cortex, hair keratin intermediate filaments are embedded in an interfilamentous matrix, consisting of hair keratin-associated proteins (KRTAP), which are essential for the formation of a rigid and resistant hair shaft through their extensive disulfide bond cross-linking with abundant cysteine residues of hair keratins. The matrix proteins include the high-sulfur and high-glycine-tyrosine keratins. This is Keratin-associated protein 13-4 (KRTAP13-4) from Macaca fascicularis (Crab-eating macaque).